The following is a 98-amino-acid chain: Large ribosomal subunit protein eL21 (98 aa).

The protein belongs to the eukaryotic ribosomal protein eL21 family.

The protein is Large ribosomal subunit protein eL21 of Korarchaeum cryptofilum (strain OPF8).